We begin with the raw amino-acid sequence, 96 residues long: Small ribosomal subunit protein bS6 (96 aa).

Belongs to the bacterial ribosomal protein bS6 family.

Binds together with bS18 to 16S ribosomal RNA. This is Small ribosomal subunit protein bS6 from Streptococcus pneumoniae serotype 19F (strain G54).